Consider the following 369-residue polypeptide: Mycofactocin maturase MftC (369 aa).

A Radical SAM core domain is found at 16–232; the sequence is LDAPICLTWE…KGERVLTGDS (217 aa). Positions 30, 34, 37, 251, 258, 269, 310, 313, 319, 323, and 341 each coordinate [4Fe-4S] cluster. The tract at residues 347–369 is disordered; sequence APALAQERHAPRPRVDHSRGSRE. Residues 352-369 are compositionally biased toward basic and acidic residues; sequence QERHAPRPRVDHSRGSRE.

It belongs to the radical SAM superfamily. MftC family. As to quaternary structure, interacts with MftB. [4Fe-4S] cluster is required as a cofactor.

It catalyses the reaction [mycofactocin precursor peptide]-C-terminal glycyl-L-valyl-L-tyrosine + S-adenosyl-L-methionine = [mycofactocin precursor peptide]-C-terminal glycyl-N-{[2-(4-hydroxyphenyl)ethenyl]-3-methylbutanamide} + 5'-deoxyadenosine + L-methionine + CO2. The enzyme catalyses [mycofactocin precursor peptide]-C-terminal glycyl-N-{[2-(4-hydroxyphenyl)ethenyl]-3-methylbutanamide} + AH2 + S-adenosyl-L-methionine = [mycofactocin precursor peptide]-C-terminal glycyl-N-{5-[(4-hydroxyphenyl)methyl]-4,4-dimethyl-2-oxopyrrolidin-3-yl}acetamide + 5'-deoxyadenosine + L-methionine + A + H(+). Radical S-adenosylmethionine (SAM) enzyme responsible for the first step of the biosynthesis of the enzyme cofactor mycofactocin (MFT). Catalyzes two reactions at the C-terminus of the mycofactocin precursor (the MftA peptide). The first one is the oxidative decarboxylation of the C-terminal L-tyrosine of MftA, forming an unsaturated tyramine moiety. The second reaction is the cross-linking of the tyramine with the penultimate L-valine residue, forming a five-membered lactam ring. Its activity requires the presence of the MftB chaperone. The sequence is that of Mycofactocin maturase MftC from Mycobacterium ulcerans (strain Agy99).